The sequence spans 429 residues: Protein ORF66 (429 aa).

This sequence belongs to the herpesviridae UL49 family. Interacts with ORF34.

Its subcellular location is the host nucleus. It is found in the host cytoplasm. Functionally, participates in the expression of late viral mRNAs. This is Protein ORF66 (ORF66) from Homo sapiens (Human).